The chain runs to 257 residues: Phosphate import ATP-binding protein PstB (257 aa).

One can recognise an ABC transporter domain in the interval 11-252 (FNISRLYLYI…PKNELTEKYV (242 aa)). 43–50 (GPSGSGKS) is a binding site for ATP.

The protein belongs to the ABC transporter superfamily. Phosphate importer (TC 3.A.1.7) family. The complex is composed of two ATP-binding proteins (PstB), two transmembrane proteins (PstC and PstA) and a solute-binding protein (PstS).

Its subcellular location is the cell membrane. It catalyses the reaction phosphate(out) + ATP + H2O = ADP + 2 phosphate(in) + H(+). Part of the ABC transporter complex PstSACB involved in phosphate import. Responsible for energy coupling to the transport system. This is Phosphate import ATP-binding protein PstB from Saccharolobus solfataricus (strain ATCC 35092 / DSM 1617 / JCM 11322 / P2) (Sulfolobus solfataricus).